The following is a 163-amino-acid chain: Nucleotide-binding protein all4662 (163 aa).

It belongs to the YajQ family.

In terms of biological role, nucleotide-binding protein. The protein is Nucleotide-binding protein all4662 of Nostoc sp. (strain PCC 7120 / SAG 25.82 / UTEX 2576).